The chain runs to 69 residues: uncharacterized protein (69 aa).

The interval 21 to 42 (MYAANKKSDARRRGKVGKEQWE) is disordered. Positions 35–69 (KVGKEQWEKEMEQYNIQKAQFEKELKEKKEKELKK) form a coiled coil.

This is an uncharacterized protein from Acheta domesticus (House cricket).